The sequence spans 253 residues: U1 small nuclear ribonucleoprotein A (253 aa).

The region spanning 23–102 (VTIYINNLNE…KPMRIQYAKT (80 aa)) is the RRM 1 domain. Positions 111–140 (DGTFVPRERRKRNDEKPEKKQKREQHHDVS) are disordered. Positions 179-253 (NILFVQNLPH…NQMLISYAKK (75 aa)) constitute an RRM 2 domain.

Belongs to the RRM U1 A/B'' family. As to quaternary structure, component of the spliceosome where it is associated with snRNP U1.

Its subcellular location is the nucleus. The protein localises to the nucleolus. In terms of biological role, involved in nuclear pre-mRNA splicing. The protein is U1 small nuclear ribonucleoprotein A of Oryza sativa subsp. indica (Rice).